The following is a 148-amino-acid chain: MPSYTHMPYVRPSAILLGIAFDHAASFLVYGPLMGDIWKRAMSTAPHVEYDAGSKTKKVATTYVSNFLSTAVQSYSIAALLQLTGTVTLKGAFFVGLYVFGASGLPDVVDYMFTESRGTPYILVKTISSLVKSVGLSVALIGYGVRRI.

Transmembrane regions (helical) follow at residues 14–34 (AILL…GPLM), 80–102 (LLQL…VFGA), and 122–142 (ILVK…ALIG).

The protein belongs to the UPF0591 family.

The protein localises to the membrane. This chain is UPF0591 membrane protein C15E1.02c, found in Schizosaccharomyces pombe (strain 972 / ATCC 24843) (Fission yeast).